Consider the following 101-residue polypeptide: Iron-sulfur cluster assembly protein CyaY (101 aa).

The protein belongs to the frataxin family.

In terms of biological role, involved in iron-sulfur (Fe-S) cluster assembly. May act as a regulator of Fe-S biogenesis. This chain is Iron-sulfur cluster assembly protein CyaY, found in Rickettsia felis (strain ATCC VR-1525 / URRWXCal2) (Rickettsia azadi).